Reading from the N-terminus, the 284-residue chain is Putative L-ribulose-5-phosphate 3-epimerase UlaE (284 aa).

The protein belongs to the L-ribulose-5-phosphate 3-epimerase family.

The enzyme catalyses L-ribulose 5-phosphate = L-xylulose 5-phosphate. It participates in cofactor degradation; L-ascorbate degradation; D-xylulose 5-phosphate from L-ascorbate: step 3/4. Catalyzes the isomerization of L-xylulose-5-phosphate to L-ribulose-5-phosphate. Is involved in the anaerobic L-ascorbate utilization. This Shigella dysenteriae serotype 1 (strain Sd197) protein is Putative L-ribulose-5-phosphate 3-epimerase UlaE.